The sequence spans 384 residues: Lipid-A-disaccharide synthase (384 aa).

Belongs to the LpxB family.

It carries out the reaction a lipid X + a UDP-2-N,3-O-bis[(3R)-3-hydroxyacyl]-alpha-D-glucosamine = a lipid A disaccharide + UDP + H(+). The protein operates within bacterial outer membrane biogenesis; LPS lipid A biosynthesis. Its function is as follows. Condensation of UDP-2,3-diacylglucosamine and 2,3-diacylglucosamine-1-phosphate to form lipid A disaccharide, a precursor of lipid A, a phosphorylated glycolipid that anchors the lipopolysaccharide to the outer membrane of the cell. The polypeptide is Lipid-A-disaccharide synthase (Geobacter sulfurreducens (strain ATCC 51573 / DSM 12127 / PCA)).